Here is a 271-residue protein sequence, read N- to C-terminus: uncharacterized protein (271 aa).

This is an uncharacterized protein from Escherichia coli (strain K12).